The chain runs to 765 residues: MVERAGWCRKKSPGFVEYGLMVLLLLLLGAIVTLGVFYSIGKQLPLLTSLLHFSWDERTVVKRALRDSSLKSDICTTPSCVIAAARILENMDQSRNPCENFYQYACGGWLRHHVIPETNSRYSVFDILRDELEVILKGVLEDSTSQHRPAVEKAKTLYRSCMNQSVIEKRDSEPLLSVLKMVGGWPVAMDKWNETMGLKWELERQLAVLNSQFNRRVLIDLFIWNDDQNSSRHVIYIDQPTLGMPSREYYFQEDNNHKVRKAYLEFMTSVATMLRKDQNLSKESAMVREEMAEVLELETHLANATVPQEKRHDVTALYHRMDLMELQERFGLKGFNWTLFIQNVLSSVEVELFPDEEVVVYGIPYLENLEDIIDSYSARTMQNYLVWRLVLDRIGSLSQRFKEARVDYRKALYGTTVEEVRWRECVSYVNSNMESAVGSLYIKRAFSKDSKSTVRELIEKIRSVFVDNLDELNWMDEESKKKAQEKAMNIREQIGYPDYILEDNNKHLDEEYSSLTFYEDLYFENGLQNLKNNAQRSLKKLREKVDQNLWIIGAAVVNAFYSPNRNQIVFPAGILQPPFFSKDQPQSLNFGGIGMVIGHEITHGFDDNGRNFDKNGNMLDWWSNFSARHFQQQSQCMIYQYGNFSWELADNQNVNGFSTLGENIADNGGVRQAYKAYLRWLADGGKDQRLPGLNLTYAQLFFINYAQVWCGSYRPEFAVQSIKTDVHSPLKYRVLGSLQNLPGFSEAFHCPRGSPMHPMKRCRIW.

Over 1–19 the chain is Cytoplasmic; the sequence is MVERAGWCRKKSPGFVEYG. Residues 20–40 traverse the membrane as a helical; Signal-anchor for type II membrane protein segment; it reads LMVLLLLLLGAIVTLGVFYSI. The Lumenal segment spans residues 41 to 765; it reads GKQLPLLTSL…MHPMKRCRIW (725 aa). In terms of domain architecture, Peptidase M13 spans 74–765; sequence ICTTPSCVIA…MHPMKRCRIW (692 aa). Disulfide bonds link C75/C80, C98/C750, C106/C710, C161/C425, and C636/C762. Residue R121 participates in a peptide binding. Residues N163, N279, N303, and N336 are each glycosylated (N-linked (GlcNAc...) asparagine). A coiled-coil region spans residues 523 to 549; sequence FENGLQNLKNNAQRSLKKLREKVDQNL. H599 provides a ligand contact to Zn(2+). E600 is a catalytic residue. Residues H603 and E662 each contribute to the Zn(2+) site. The active-site Proton donor is D666. An N-linked (GlcNAc...) asparagine glycan is attached at N694.

It belongs to the peptidase M13 family. It depends on Zn(2+) as a cofactor. In terms of processing, N-glycosylated. In terms of tissue distribution, highly expressed in testis. Also expressed in ovary. Weakly or not expressed in brain, lung, heart, liver, kidney, adrenal gland and intestine.

It localises to the membrane. The protein localises to the secreted. It carries out the reaction Preferential cleavage of polypeptides between hydrophobic residues, particularly with Phe or Tyr at P1'.. Inhibited by thiorphan and phosphoramidon. In terms of biological role, metalloprotease involved in sperm function, possibly by modulating the processes of fertilization and early embryonic development. Degrades a broad variety of small peptides with a preference for peptides shorter than 3 kDa containing neutral bulky aliphatic or aromatic amino acid residues. Shares the same substrate specificity with MME and cleaves peptides at the same amide bond. The protein is Membrane metallo-endopeptidase-like 1 (Mmel1) of Mus musculus (Mouse).